A 213-amino-acid chain; its full sequence is MKIIMLGAPGAGKGTQAKKIAAKYAIPHISTGDIFRANIKNNTELGQKAKTYMDKGELVPDELVVDLIMDRFKEADCANGYVLDGFPRTIPQAEALDKALSANGESVDYAINVEVPDENIINRMSGRRACVGCGATYHIQFNPTKVEGICDACGEKLILRDDDKPETVKNRLSVYHEQTQPLIEYYSGKGVLKEVDGTQPMDDVFAAIVKILG.

ATP is bound at residue Gly-10–Thr-15. The interval Ser-30–Val-59 is NMP. AMP contacts are provided by residues Thr-31, Arg-36, Glu-57–Val-59, Gly-85–Arg-88, and Gln-92. Residues Gly-126 to Asp-163 are LID. Position 127 (Arg-127) interacts with ATP. Zn(2+)-binding residues include Cys-130 and Cys-133. Thr-136–Tyr-137 serves as a coordination point for ATP. Zn(2+) contacts are provided by Cys-150 and Cys-153. Positions 160 and 171 each coordinate AMP. Gln-199 provides a ligand contact to ATP.

Belongs to the adenylate kinase family. As to quaternary structure, monomer.

The protein resides in the cytoplasm. The catalysed reaction is AMP + ATP = 2 ADP. It participates in purine metabolism; AMP biosynthesis via salvage pathway; AMP from ADP: step 1/1. Catalyzes the reversible transfer of the terminal phosphate group between ATP and AMP. Plays an important role in cellular energy homeostasis and in adenine nucleotide metabolism. This is Adenylate kinase from Lachnospira eligens (strain ATCC 27750 / DSM 3376 / VPI C15-48 / C15-B4) (Eubacterium eligens).